The sequence spans 138 residues: MSEQSAPSPTPAAELSSDPASPLPQEIASALKRDSSGLVAAIVQQHDTNEVLMLGWMDDEALHRTMTSGRVTFYSRSRQEYWRKGDTSGHVQFVKSVALDCDGDALLIRVDQIGAACHTGTRTCFDGRDFTVVTGHRE.

The interval 1–23 (MSEQSAPSPTPAAELSSDPASPL) is disordered. Position 100 (aspartate 100) interacts with Mg(2+). Cysteine 101 is a Zn(2+) binding site. Positions 102 and 104 each coordinate Mg(2+). Zn(2+) contacts are provided by cysteine 117 and cysteine 124.

Belongs to the PRA-CH family. Homodimer. Requires Mg(2+) as cofactor. Zn(2+) is required as a cofactor.

Its subcellular location is the cytoplasm. The catalysed reaction is 1-(5-phospho-beta-D-ribosyl)-5'-AMP + H2O = 1-(5-phospho-beta-D-ribosyl)-5-[(5-phospho-beta-D-ribosylamino)methylideneamino]imidazole-4-carboxamide. Its pathway is amino-acid biosynthesis; L-histidine biosynthesis; L-histidine from 5-phospho-alpha-D-ribose 1-diphosphate: step 3/9. Its function is as follows. Catalyzes the hydrolysis of the adenine ring of phosphoribosyl-AMP. This Paenarthrobacter aurescens (strain TC1) protein is Phosphoribosyl-AMP cyclohydrolase.